The chain runs to 430 residues: Phosphoribosylamine--glycine ligase (430 aa).

Positions 109–314 (RGLMNKYGID…FLTIAEHIIN (206 aa)) constitute an ATP-grasp domain. 136-192 (IREYPGDLAVKPTGLTGGKGVKVMGEQVDREGAVEYAMTLKDQVIILEERLLGEEFT) contacts ATP. Positions 272, 284, and 286 each coordinate Mg(2+). Mn(2+) is bound by residues Gln272, Glu284, and Asn286.

The protein belongs to the GARS family. Mg(2+) serves as cofactor. The cofactor is Mn(2+).

The catalysed reaction is 5-phospho-beta-D-ribosylamine + glycine + ATP = N(1)-(5-phospho-beta-D-ribosyl)glycinamide + ADP + phosphate + H(+). It functions in the pathway purine metabolism; IMP biosynthesis via de novo pathway; N(1)-(5-phospho-D-ribosyl)glycinamide from 5-phospho-alpha-D-ribose 1-diphosphate: step 2/2. The polypeptide is Phosphoribosylamine--glycine ligase (Methanocorpusculum labreanum (strain ATCC 43576 / DSM 4855 / Z)).